Consider the following 245-residue polypeptide: uncharacterized protein (245 aa).

Residues 162 to 174 (KEQSDVTTSERTR) are compositionally biased toward basic and acidic residues. A disordered region spans residues 162-183 (KEQSDVTTSERTRSPPGSSKTT).

This is an uncharacterized protein from Homo sapiens (Human).